We begin with the raw amino-acid sequence, 3326 residues long: Deoxyribonuclease CdiA (3326 aa).

The tract at residues 36-342 is two-partner system transport domain (TPS); that stretch reads TADGVLTSGG…ARGALTLTGS (307 aa). Residues 343-1396 form an FHA-1 region; it reads YAGAGSLYSD…ITVRTGTLTN (1054 aa). A receptor binding domain (RBD) region spans residues 1397 to 1765; sequence QREGLVVTES…QQLGSPSLTD (369 aa). The interval 1766 to 1951 is YP domain; sequence YPLPTSQSGL…LAQADKTNLQ (186 aa). Residues 1959–2097 form a periplasmic FHA-1 repeat (pFR) region; that stretch reads SVSLSAGGDI…AGGPLQLAAG (139 aa). The segment at 2125–2660 is FHA-2; sequence QGLVQSTVAS…SNRYDSKQTS (536 aa). A VENN CT cleavage motif motif is present at residues 3060 to 3063; sequence VENN. The tract at residues 3060 to 3326 is CT domain; it reads VENNSLGDIA…DRNRQIGVIK (267 aa).

This sequence in the N-terminal section; belongs to the CdiA toxin family. The C-terminal (CT) domain interacts with cognate CdiI but not non-cognate CdiI from E.coli strain 536 / UPEC.

The protein localises to the target cell. It is found in the target cell cytoplasm. Toxic component of a toxin-immunity protein module, which functions as a cellular contact-dependent growth inhibition (CDI) system. CDI modules allow bacteria to communicate with and inhibit the growth of closely related neighboring bacteria in a contact-dependent fashion. CDI is neutralized by its cognate immunity protein CdiI, but not by non-cognate CdiI from other bacteria. The C-terminal domain (CT) has strong DNase activity; this activity is inhibited by cognate CdiI. Its function is as follows. The CdiA protein is thought to be exported from the cell through the central lumen of CdiB, the other half of its two-partner system (TPS). The TPS domain probably remains associated with CdiB while the FHA-1 domain forms an extended filament with the receptor-binding domain (RBD) at its extremity; in the secretion arrested state the C-terminus of the RBD and YP domains form a hairpin-like structure as the FHA-2, PT and CT domains are periplasmic. The YP domain is probably responsible for this arrest at the point where it re-enters the host cell periplasm. Upon binding to a target cell outer membrane receptor a signal is transmitted to activate secretion. The filament elongates slightly, the rest of CdiA is secreted and the FHA-2 domain becomes stably associated with the target cell's outer membrane where it facilitates entry of the toxic CT domain into the target cell periplasm. From there the toxic CT domain is cleaved and gains access to the target cell cytoplasm via an inner membrane protein. The chain is Deoxyribonuclease CdiA from Dickeya dadantii (strain 3937) (Erwinia chrysanthemi (strain 3937)).